The primary structure comprises 166 residues: Crossover junction endodeoxyribonuclease RuvC (166 aa).

Catalysis depends on residues D7, E67, and D139. Mg(2+)-binding residues include D7, E67, and D139.

The protein belongs to the RuvC family. As to quaternary structure, homodimer which binds Holliday junction (HJ) DNA. The HJ becomes 2-fold symmetrical on binding to RuvC with unstacked arms; it has a different conformation from HJ DNA in complex with RuvA. In the full resolvosome a probable DNA-RuvA(4)-RuvB(12)-RuvC(2) complex forms which resolves the HJ. Mg(2+) serves as cofactor.

The protein resides in the cytoplasm. It carries out the reaction Endonucleolytic cleavage at a junction such as a reciprocal single-stranded crossover between two homologous DNA duplexes (Holliday junction).. Functionally, the RuvA-RuvB-RuvC complex processes Holliday junction (HJ) DNA during genetic recombination and DNA repair. Endonuclease that resolves HJ intermediates. Cleaves cruciform DNA by making single-stranded nicks across the HJ at symmetrical positions within the homologous arms, yielding a 5'-phosphate and a 3'-hydroxyl group; requires a central core of homology in the junction. The consensus cleavage sequence is 5'-(A/T)TT(C/G)-3'. Cleavage occurs on the 3'-side of the TT dinucleotide at the point of strand exchange. HJ branch migration catalyzed by RuvA-RuvB allows RuvC to scan DNA until it finds its consensus sequence, where it cleaves and resolves the cruciform DNA. The sequence is that of Crossover junction endodeoxyribonuclease RuvC from Paramagnetospirillum magneticum (strain ATCC 700264 / AMB-1) (Magnetospirillum magneticum).